The primary structure comprises 189 residues: Ras-like protein 1 (189 aa).

10 to 17 (GAGGVGKS) lines the GTP pocket. The Effector region motif lies at 32 to 40 (YDPTIEDSY). GTP contacts are provided by residues 57-61 (DTAGQ) and 116-119 (NKCD). A Cysteine methyl ester modification is found at Cys186. Cys186 is lipidated: S-geranylgeranyl cysteine. A propeptide spans 187–189 (KIL) (removed in mature form).

This sequence belongs to the small GTPase superfamily. Ras family.

It localises to the cell membrane. It catalyses the reaction GTP + H2O = GDP + phosphate + H(+). Its activity is regulated as follows. Alternates between an inactive form bound to GDP and an active form bound to GTP. Activated by a guanine nucleotide-exchange factor (GEF) and inactivated by a GTPase-activating protein (GAP). Ras proteins bind GDP/GTP and possess intrinsic GTPase activity. Plays a role in eye development by regulating cell growth, survival of postmitotic ommatidial cells and differentiation of photoreceptor cells. During larval development, mediates Ptth/tor signaling leading to the production of ecdysone, a hormone required for the initiation of metamorphosis. In Drosophila persimilis (Fruit fly), this protein is Ras-like protein 1.